We begin with the raw amino-acid sequence, 464 residues long: UDP-N-acetylmuramoyl-tripeptide--D-alanyl-D-alanine ligase (464 aa).

125-131 (GSNGKTT) contributes to the ATP binding site.

The protein belongs to the MurCDEF family. MurF subfamily.

It is found in the cytoplasm. The catalysed reaction is D-alanyl-D-alanine + UDP-N-acetyl-alpha-D-muramoyl-L-alanyl-gamma-D-glutamyl-meso-2,6-diaminopimelate + ATP = UDP-N-acetyl-alpha-D-muramoyl-L-alanyl-gamma-D-glutamyl-meso-2,6-diaminopimeloyl-D-alanyl-D-alanine + ADP + phosphate + H(+). Its pathway is cell wall biogenesis; peptidoglycan biosynthesis. Its function is as follows. Involved in cell wall formation. Catalyzes the final step in the synthesis of UDP-N-acetylmuramoyl-pentapeptide, the precursor of murein. The sequence is that of UDP-N-acetylmuramoyl-tripeptide--D-alanyl-D-alanine ligase from Borreliella burgdorferi (strain ATCC 35210 / DSM 4680 / CIP 102532 / B31) (Borrelia burgdorferi).